Here is a 188-residue protein sequence, read N- to C-terminus: Protein GrpE 2 (188 aa).

It belongs to the GrpE family. As to quaternary structure, homodimer.

The protein resides in the cytoplasm. Functionally, participates actively in the response to hyperosmotic and heat shock by preventing the aggregation of stress-denatured proteins, in association with DnaK and GrpE. It is the nucleotide exchange factor for DnaK and may function as a thermosensor. Unfolded proteins bind initially to DnaJ; upon interaction with the DnaJ-bound protein, DnaK hydrolyzes its bound ATP, resulting in the formation of a stable complex. GrpE releases ADP from DnaK; ATP binding to DnaK triggers the release of the substrate protein, thus completing the reaction cycle. Several rounds of ATP-dependent interactions between DnaJ, DnaK and GrpE are required for fully efficient folding. The polypeptide is Protein GrpE 2 (Buchnera aphidicola subsp. Acyrthosiphon pisum (strain APS) (Acyrthosiphon pisum symbiotic bacterium)).